The sequence spans 297 residues: Carbamate kinase (297 aa).

The protein belongs to the carbamate kinase family.

Its subcellular location is the cytoplasm. The enzyme catalyses hydrogencarbonate + NH4(+) + ATP = carbamoyl phosphate + ADP + H2O + H(+). It carries out the reaction carbamate + ATP = carbamoyl phosphate + ADP. The catalysed reaction is hydrogencarbonate + NH4(+) = carbamate + H2O + H(+). It participates in nitrogen metabolism; (S)-allantoin degradation. Kinase involved in the anaerobic nitrogen utilization via the assimilation of allantoin. Catalyzes the transfer of a phosphate group from carbamoyl phosphate to ADP to produce ATP and leave carbamate, which spontaneously hydrolyzes to ammonia and hydrogencarbonate. This is Carbamate kinase from Escherichia coli O6:H1 (strain CFT073 / ATCC 700928 / UPEC).